Here is a 164-residue protein sequence, read N- to C-terminus: uncharacterized protein (164 aa).

The 129-residue stretch at 1–129 folds into the BFN domain; the sequence is MGEVRVVGIR…AVLAQAGLLI (129 aa).

This is an uncharacterized protein from Mycobacterium tuberculosis (strain CDC 1551 / Oshkosh).